Reading from the N-terminus, the 283-residue chain is Ribosome biogenesis GTPase A (283 aa).

The CP-type G domain occupies 14 to 178 (RREVTEKLKL…LLDTPGILWP (165 aa)). Residues 58-61 (NKAD), 86-87 (NS), 130-135 (NVGKST), and Gly174 contribute to the GTP site.

This sequence belongs to the TRAFAC class YlqF/YawG GTPase family. MTG1 subfamily. As to quaternary structure, interacts with ctc. Interacts with the immature 50S ribosome subunit. 2 molecules of rbgA bind to one 50S subunit.

The protein resides in the cytoplasm. In terms of biological role, essential protein that is required for a late step of 50S ribosomal subunit assembly. Has GTPase activity that is stimulated by interaction with the immature 50S ribosome subunit. Binds to the 23S rRNA. Required for the association of ribosomal proteins rplP and rpmA with the large subunit. This is Ribosome biogenesis GTPase A from Bacillus licheniformis (strain ATCC 14580 / DSM 13 / JCM 2505 / CCUG 7422 / NBRC 12200 / NCIMB 9375 / NCTC 10341 / NRRL NRS-1264 / Gibson 46).